Here is a 55-residue protein sequence, read N- to C-terminus: Large ribosomal subunit protein bL32 (55 aa).

A compositionally biased stretch (basic residues) spans 1–19; it reads MAVPKRRMSRANTHTRRSQ. The segment at 1 to 21 is disordered; it reads MAVPKRRMSRANTHTRRSQWK.

This sequence belongs to the bacterial ribosomal protein bL32 family.

This chain is Large ribosomal subunit protein bL32, found in Corynebacterium kroppenstedtii (strain DSM 44385 / JCM 11950 / CIP 105744 / CCUG 35717).